Consider the following 429-residue polypeptide: Ribosomal RNA small subunit methyltransferase B (429 aa).

S-adenosyl-L-methionine contacts are provided by residues 254-260 (CAAPGGK), Asp277, Asp303, and Asp322. Residue Cys375 is the Nucleophile of the active site.

Belongs to the class I-like SAM-binding methyltransferase superfamily. RsmB/NOP family.

The protein localises to the cytoplasm. It catalyses the reaction cytidine(967) in 16S rRNA + S-adenosyl-L-methionine = 5-methylcytidine(967) in 16S rRNA + S-adenosyl-L-homocysteine + H(+). Functionally, specifically methylates the cytosine at position 967 (m5C967) of 16S rRNA. The protein is Ribosomal RNA small subunit methyltransferase B of Escherichia coli (strain SMS-3-5 / SECEC).